Here is an 859-residue protein sequence, read N- to C-terminus: Linoleate 9S-lipoxygenase B (859 aa).

The 125-residue stretch at 34-158 (INIGASVVDG…RYKSDRIFFA (125 aa)) folds into the PLAT domain. Residues 161–859 (AYLPSETPQP…GKGIPNSVSI (699 aa)) form the Lipoxygenase domain. Residues 213–246 (EYARPILGGSSEYPYPRRGRTGREPTKADPNCES) are disordered. A compositionally biased stretch (basic and acidic residues) spans 233-244 (TGREPTKADPNC). 4 residues coordinate Fe cation: H521, H526, H711, and I859.

Belongs to the lipoxygenase family. In terms of assembly, monomer. The cofactor is Fe cation. In terms of tissue distribution, fruit specific.

It localises to the cytoplasm. It carries out the reaction (9Z,12Z)-octadecadienoate + O2 = (9S)-hydroperoxy-(10E,12Z)-octadecadienoate. The protein operates within lipid metabolism; oxylipin biosynthesis. Its function is as follows. Plant lipoxygenase may be involved in a number of diverse aspects of plant physiology including growth and development, pest resistance, and senescence or responses to wounding. It catalyzes the hydroperoxidation of lipids containing a cis,cis-1,4-pentadiene structure. The chain is Linoleate 9S-lipoxygenase B (LOX1.2) from Solanum lycopersicum (Tomato).